Reading from the N-terminus, the 297-residue chain is HTH-type transcriptional regulator ArgP (297 aa).

The 57-residue stretch at 4–60 (PDYRTLQALDAVIRERGFERAAQKLCITQSAVSQRIKQLENLFGQPLLVRTVPPRPT) folds into the HTH lysR-type domain. The H-T-H motif DNA-binding region spans 21-40 (FERAAQKLCITQSAVSQRIK).

This sequence belongs to the LysR transcriptional regulatory family. In terms of assembly, homodimer.

Its function is as follows. Controls the transcription of genes involved in arginine and lysine metabolism. The chain is HTH-type transcriptional regulator ArgP from Yersinia enterocolitica serotype O:8 / biotype 1B (strain NCTC 13174 / 8081).